The sequence spans 438 residues: (S)-3,5-dihydroxyphenylglycine transaminase (438 aa).

At Lys266 the chain carries N6-(pyridoxal phosphate)lysine.

Belongs to the class-I pyridoxal-phosphate-dependent aminotransferase family. It depends on pyridoxal 5'-phosphate as a cofactor.

It catalyses the reaction (S)-3,5-dihydroxyphenylglycine + 2-oxoglutarate = 2-(3,5-dihydroxyphenyl)-2-oxoacetate + L-glutamate. Its pathway is antibiotic biosynthesis; vancomycin biosynthesis. In terms of biological role, catalyzes the transamination of p-hydroxybenzoylformate to L-p-hydroxyphenylglycine as part of the biosynthesis of the (S)-3,5-dihydroxyphenylglycine constituent of the glycopeptide antibiotic chloroeremomycin, a member of the vancomycin group of antibiotics. This chain is (S)-3,5-dihydroxyphenylglycine transaminase (hpgT), found in Amycolatopsis orientalis (Nocardia orientalis).